The chain runs to 79 residues: Cell division protein ZapB (79 aa).

The stretch at 6–78 (FEKLEVKVQQ…LRALLGKMEE (73 aa)) forms a coiled coil.

This sequence belongs to the ZapB family. As to quaternary structure, homodimer. The ends of the coiled-coil dimer bind to each other, forming polymers. Interacts with FtsZ.

The protein resides in the cytoplasm. Functionally, non-essential, abundant cell division factor that is required for proper Z-ring formation. It is recruited early to the divisome by direct interaction with FtsZ, stimulating Z-ring assembly and thereby promoting cell division earlier in the cell cycle. Its recruitment to the Z-ring requires functional FtsA or ZipA. This is Cell division protein ZapB from Yersinia pseudotuberculosis serotype O:1b (strain IP 31758).